Consider the following 262-residue polypeptide: ELL-associated factor 2 (262 aa).

The interval L17–S104 is necessary for interaction with ELL. Residues L124–S144 are compositionally biased toward polar residues. Disordered stretches follow at residues L124 to S154 and M170 to T232. Residues S146, S151, and S154 each carry the phosphoserine modification. Over residues S174–D192 the composition is skewed to low complexity. The necessary for transactivation activity stretch occupies residues D177–D262. Residues R248 to D262 are necessary for interaction with TCEA1 and transactivation activity.

Belongs to the EAF family. As to quaternary structure, component of the super elongation complex (SEC), at least composed of EAF1, EAF2, CDK9, MLLT3/AF9, AFF (AFF1 or AFF4), the P-TEFb complex and ELL (ELL, ELL2 or ELL3). Interacts with ELL, ELL2 and TCEA1.

It localises to the nucleus speckle. Its function is as follows. Acts as a transcriptional transactivator of ELL, ELL2 and TCEA1 elongation activities. Potent inducer of apoptosis in prostatic and non-prostatic cell lines. The chain is ELL-associated factor 2 (Eaf2) from Rattus norvegicus (Rat).